The chain runs to 277 residues: Formamidopyrimidine-DNA glycosylase (277 aa).

The Schiff-base intermediate with DNA role is filled by P2. E3 serves as the catalytic Proton donor. K60 (proton donor; for beta-elimination activity) is an active-site residue. DNA-binding residues include H94, R113, and R156. The segment at 241-275 (KVYNREGLPCPHCGKPIQRIKVAGRSSYYCSSCQK) adopts an FPG-type zinc-finger fold. Catalysis depends on R265, which acts as the Proton donor; for delta-elimination activity.

It belongs to the FPG family. As to quaternary structure, monomer. Zn(2+) serves as cofactor.

It catalyses the reaction Hydrolysis of DNA containing ring-opened 7-methylguanine residues, releasing 2,6-diamino-4-hydroxy-5-(N-methyl)formamidopyrimidine.. It carries out the reaction 2'-deoxyribonucleotide-(2'-deoxyribose 5'-phosphate)-2'-deoxyribonucleotide-DNA = a 3'-end 2'-deoxyribonucleotide-(2,3-dehydro-2,3-deoxyribose 5'-phosphate)-DNA + a 5'-end 5'-phospho-2'-deoxyribonucleoside-DNA + H(+). Functionally, involved in base excision repair of DNA damaged by oxidation or by mutagenic agents. Acts as a DNA glycosylase that recognizes and removes damaged bases. Has a preference for oxidized purines, such as 7,8-dihydro-8-oxoguanine (8-oxoG). Has AP (apurinic/apyrimidinic) lyase activity and introduces nicks in the DNA strand. Cleaves the DNA backbone by beta-delta elimination to generate a single-strand break at the site of the removed base with both 3'- and 5'-phosphates. The protein is Formamidopyrimidine-DNA glycosylase of Desulforamulus reducens (strain ATCC BAA-1160 / DSM 100696 / MI-1) (Desulfotomaculum reducens).